The primary structure comprises 764 residues: 5-methyltetrahydropteroyltriglutamate--homocysteine methyltransferase (764 aa).

Residues 16-19 (RELK) and Lys115 contribute to the 5-methyltetrahydropteroyltri-L-glutamate site. Residues 435–437 (IGS) and Glu488 each bind L-homocysteine. Residues 435–437 (IGS) and Glu488 each bind L-methionine. 5-methyltetrahydropteroyltri-L-glutamate-binding positions include 519-520 (RC) and Trp565. Residue Asp603 coordinates L-homocysteine. Asp603 contacts L-methionine. Glu609 contributes to the 5-methyltetrahydropteroyltri-L-glutamate binding site. Residues His645, Cys647, and Glu669 each contribute to the Zn(2+) site. His698 acts as the Proton donor in catalysis. Cys730 serves as a coordination point for Zn(2+).

Belongs to the vitamin-B12 independent methionine synthase family. Zn(2+) serves as cofactor.

The enzyme catalyses 5-methyltetrahydropteroyltri-L-glutamate + L-homocysteine = tetrahydropteroyltri-L-glutamate + L-methionine. It participates in amino-acid biosynthesis; L-methionine biosynthesis via de novo pathway; L-methionine from L-homocysteine (MetE route): step 1/1. In terms of biological role, catalyzes the transfer of a methyl group from 5-methyltetrahydrofolate to homocysteine resulting in methionine formation. This chain is 5-methyltetrahydropteroyltriglutamate--homocysteine methyltransferase, found in Burkholderia thailandensis (strain ATCC 700388 / DSM 13276 / CCUG 48851 / CIP 106301 / E264).